The following is a 344-amino-acid chain: L-rhamnose-proton symporter (344 aa).

The next 10 membrane-spanning stretches (helical) occupy residues 4 to 24 (PILL…CFYA), 38 to 58 (WSLG…WWLL), 68 to 88 (FDMA…IGNI), 101 to 121 (MGIG…TPVL), 137 to 157 (TLLG…AGLL), 175 to 195 (LILA…MDAA), 214 to 234 (LPSY…FCFI), 255 to 275 (LIAN…QFFF), 290 to 310 (ISWM…GLLF), and 324 to 344 (LVLG…GMAV).

Belongs to the L-rhamnose transporter (TC 2.A.7.6) family.

The protein localises to the cell inner membrane. The catalysed reaction is L-rhamnopyranose(in) + H(+)(in) = L-rhamnopyranose(out) + H(+)(out). Uptake of L-rhamnose across the cytoplasmic membrane with the concomitant transport of protons into the cell (symport system). In Pectobacterium atrosepticum (strain SCRI 1043 / ATCC BAA-672) (Erwinia carotovora subsp. atroseptica), this protein is L-rhamnose-proton symporter.